Reading from the N-terminus, the 306-residue chain is ATP synthase F(1) complex subunit gamma, mitochondrial (306 aa).

Residues 1–17 (MNSASKLFVVLASPANQ) constitute a mitochondrion transit peptide.

The protein belongs to the ATPase gamma chain family. As to quaternary structure, component of the ATP synthase complex composed at least of ATP5F1A/subunit alpha, ATP5F1B/subunit beta, ATP5MC1/subunit c (homooctomer), MT-ATP6/subunit a, MT-ATP8/subunit 8, ATP5ME/subunit e, ATP5MF/subunit f, ATP5MG/subunit g, ATP5MK/subunit k, ATP5MJ/subunit j, ATP5F1C/subunit gamma, ATP5F1D/subunit delta, ATP5F1E/subunit epsilon, ATP5PF/subunit F6, ATP5PB/subunit b, ATP5PD/subunit d, ATP5PO/subunit OSCP. ATP synthase complex consists of a soluble F(1) head domain (subunits alpha(3) and beta(3)) - the catalytic core - and a membrane F(0) domain - the membrane proton channel (subunits c, a, 8, e, f, g, k and j). These two domains are linked by a central stalk (subunits gamma, delta, and epsilon) rotating inside the F1 region and a stationary peripheral stalk (subunits F6, b, d, and OSCP).

The protein localises to the mitochondrion inner membrane. Subunit gamma, of the mitochondrial membrane ATP synthase complex (F(1)F(0) ATP synthase or Complex V) that produces ATP from ADP in the presence of a proton gradient across the membrane which is generated by electron transport complexes of the respiratory chain. ATP synthase complex consist of a soluble F(1) head domain - the catalytic core - and a membrane F(1) domain - the membrane proton channel. These two domains are linked by a central stalk rotating inside the F(1) region and a stationary peripheral stalk. During catalysis, ATP synthesis in the catalytic domain of F(1) is coupled via a rotary mechanism of the central stalk subunits to proton translocation. In vivo, can only synthesize ATP although its ATP hydrolase activity can be activated artificially in vitro. With the central stalk subunit delta, is essential for the biogenesis of F(1) catalytic part of the ATP synthase complex namely in the formation of F1 assembly intermediate. In Dictyostelium discoideum (Social amoeba), this protein is ATP synthase F(1) complex subunit gamma, mitochondrial.